A 484-amino-acid chain; its full sequence is Polyamine oxidase 3 (484 aa).

FAD contacts are provided by E47, R55, V236, and E423. The short motif at 482–484 is the Microbody targeting signal element; that stretch reads SRL.

The protein belongs to the flavin monoamine oxidase family. Requires FAD as cofactor. In terms of tissue distribution, widely expressed.

It is found in the peroxisome. The catalysed reaction is spermine + O2 + H2O = 3-aminopropanal + spermidine + H2O2. It carries out the reaction N(1)-acetylspermine + O2 + H2O = 3-acetamidopropanal + spermidine + H2O2. It catalyses the reaction norspermine + O2 + H2O = norspermidine + 3-aminopropanal + H2O2. The enzyme catalyses spermidine + O2 + H2O = 3-aminopropanal + putrescine + H2O2. The catalysed reaction is thermospermine + O2 + H2O = 3-aminopropanal + spermidine + H2O2. It participates in amine and polyamine degradation; spermine degradation. It functions in the pathway amine and polyamine degradation; spermidine degradation. Its function is as follows. Flavoenzyme involved in polyamine back-conversion. Catalyzes the oxidation of the secondary amino group of polyamines, such as spermine, spermidine and their acetyl derivatives. Substrate preference is spermidine &gt; norspermine &gt; thermospermine &gt; N(1)-acetylspermine &gt; spermine. No activity detected when putrescine is used as substrate. Plays an important role in the regulation of polyamine intracellular concentration. The polypeptide is Polyamine oxidase 3 (Oryza sativa subsp. japonica (Rice)).